Consider the following 452-residue polypeptide: UDP-N-acetylmuramoyl-L-alanine--L-glutamate ligase (452 aa).

118–124 contacts ATP; the sequence is GSKGKST.

It belongs to the MurCDEF family. MurD2 subfamily.

The protein localises to the cytoplasm. It carries out the reaction UDP-N-acetyl-alpha-D-muramoyl-L-alanine + L-glutamate + ATP = UDP-N-acetyl-alpha-D-muramoyl-L-alanyl-L-glutamate + ADP + phosphate + H(+). The protein operates within cell wall biogenesis; peptidoglycan biosynthesis. In terms of biological role, cell wall formation. Catalyzes the addition of L-glutamate to the nucleotide precursor UDP-N-acetylmuramoyl-L-alanine. This Micromonospora sp. (strain ATCC 39149 / NRRL 15099 / SCC 1413) protein is UDP-N-acetylmuramoyl-L-alanine--L-glutamate ligase.